Reading from the N-terminus, the 708-residue chain is Glycine--tRNA ligase beta subunit (708 aa).

Belongs to the class-II aminoacyl-tRNA synthetase family. In terms of assembly, tetramer of two alpha and two beta subunits.

It localises to the cytoplasm. The catalysed reaction is tRNA(Gly) + glycine + ATP = glycyl-tRNA(Gly) + AMP + diphosphate. This Paracidovorax citrulli (strain AAC00-1) (Acidovorax citrulli) protein is Glycine--tRNA ligase beta subunit.